We begin with the raw amino-acid sequence, 152 residues long: Ribonuclease pancreatic gamma-type (152 aa).

The signal sequence occupies residues 1 to 25 (MGLEKSLFLFSLLVLVLGWVQPSLG). Substrate-binding residues include K35 and R38. The Proton acceptor role is filled by H40. Cystine bridges form between C54–C112, C68–C123, C86–C138, and C93–C100. Residues 69-73 (KSMNT), K94, and R113 contribute to the substrate site. The active-site Proton donor is H147.

It belongs to the pancreatic ribonuclease family. As to quaternary structure, monomer.

It is found in the secreted. The catalysed reaction is an [RNA] containing cytidine + H2O = an [RNA]-3'-cytidine-3'-phosphate + a 5'-hydroxy-ribonucleotide-3'-[RNA].. It carries out the reaction an [RNA] containing uridine + H2O = an [RNA]-3'-uridine-3'-phosphate + a 5'-hydroxy-ribonucleotide-3'-[RNA].. Endonuclease that catalyzes the cleavage of RNA on the 3' side of pyrimidine nucleotides. Acts on single-stranded and double-stranded RNA. This Rattus norvegicus (Rat) protein is Ribonuclease pancreatic gamma-type.